The chain runs to 84 residues: Gomesin (84 aa).

Residues 1-23 (MNRTRLFACLLLAVLILVHESNA) form the signal peptide. Gln24 bears the Pyrrolidone carboxylic acid mark. Cystine bridges form between Cys25-Cys38 and Cys29-Cys34. The residue at position 41 (Arg41) is an Arginine amide. Residues 42-84 (GKRSLDETNVGTSDVEKRAFDDSNVPSLVEERELEDEGSFIFD) constitute a propeptide that is removed on maturation.

As to expression, in hemocytes only, but not in all hemocytes observed.

The protein localises to the secreted. In terms of biological role, active against several Gram-positive bacteria such as Bacillus spp, Staphylococcus spp and E.faecalis, several Gram-negative bacteria such as E.coli, K.pneumoniae, P.aeruginosa and Salmonella spp, filamentous fungi such as N.crassa, T.viridae and yeasts such as C.albicans. It is active against the parasite L.amazonensis as well. It shows hemolytic activity. The chain is Gomesin from Acanthoscurria gomesiana (Tarantula spider).